The primary structure comprises 414 residues: Gamma-glutamyl phosphate reductase (414 aa).

Belongs to the gamma-glutamyl phosphate reductase family.

Its subcellular location is the cytoplasm. It catalyses the reaction L-glutamate 5-semialdehyde + phosphate + NADP(+) = L-glutamyl 5-phosphate + NADPH + H(+). The protein operates within amino-acid biosynthesis; L-proline biosynthesis; L-glutamate 5-semialdehyde from L-glutamate: step 2/2. Its function is as follows. Catalyzes the NADPH-dependent reduction of L-glutamate 5-phosphate into L-glutamate 5-semialdehyde and phosphate. The product spontaneously undergoes cyclization to form 1-pyrroline-5-carboxylate. The protein is Gamma-glutamyl phosphate reductase of Xanthomonas campestris pv. campestris (strain B100).